Consider the following 271-residue polypeptide: MPASQSRARARDRNNVLNRAEFLSLNQPPKGGPEPRSSGRKASGPSAQPPPAGDGARERRQSQQLPEEDCMQLNPSFKGIAFNSLLAIDICMSKRLGVCAGRAASWASARSMVKLIGITGHGIPWIGGTILCLVKSSTLAGQEVLMNLLLALLLDIMTVAGVQKLIKRRGPYETSPSLLDYLTMDIYAFPAGHASRAAMVSKFFLSHLVLAVPLRVLLVLWALCVGLSRVMIGRHHVTDVLSGFVIGYLQFRLVELVWMPSSTCQMLISAW.

The disordered stretch occupies residues 1 to 66; the sequence is MPASQSRARA…RERRQSQQLP (66 aa). The Cytoplasmic portion of the chain corresponds to 1–112; the sequence is MPASQSRARA…AASWASARSM (112 aa). Serine 43 and serine 62 each carry phosphoserine. The tract at residues 70-91 is interaction with MTOR; the sequence is CMQLNPSFKGIAFNSLLAIDIC. A helical transmembrane segment spans residues 113–133; the sequence is VKLIGITGHGIPWIGGTILCL. Topologically, residues 134–141 are extracellular; it reads VKSSTLAG. Residues 142-162 form a helical membrane-spanning segment; sequence QEVLMNLLLALLLDIMTVAGV. The Cytoplasmic segment spans residues 163–202; the sequence is QKLIKRRGPYETSPSLLDYLTMDIYAFPAGHASRAAMVSK. The helical transmembrane segment at 203 to 223 threads the bilayer; sequence FFLSHLVLAVPLRVLLVLWAL. Residues 224-239 lie on the Extracellular side of the membrane; that stretch reads CVGLSRVMIGRHHVTD. The helical transmembrane segment at 240–260 threads the bilayer; sequence VLSGFVIGYLQFRLVELVWMP. The Cytoplasmic segment spans residues 261–271; sequence SSTCQMLISAW.

This sequence belongs to the PA-phosphatase related phosphoesterase family. In terms of assembly, homo and heterooligomer. Interacts with MTOR; controls MTOR-dependent IGF2 expression during myoblast differentiation.

The protein resides in the nucleus envelope. It localises to the endoplasmic reticulum membrane. It is found in the membrane. Plays a role as negative regulator of myoblast differentiation, in part through effects on MTOR signaling. Has no detectable enzymatic activity. The protein is Inactive phospholipid phosphatase 7 of Homo sapiens (Human).